A 530-amino-acid chain; its full sequence is Glucose-6-phosphate isomerase (530 aa).

E322 acts as the Proton donor in catalysis. Catalysis depends on residues H351 and K455.

It belongs to the GPI family.

The protein resides in the cytoplasm. It catalyses the reaction alpha-D-glucose 6-phosphate = beta-D-fructose 6-phosphate. It participates in carbohydrate biosynthesis; gluconeogenesis. Its pathway is carbohydrate degradation; glycolysis; D-glyceraldehyde 3-phosphate and glycerone phosphate from D-glucose: step 2/4. In terms of biological role, catalyzes the reversible isomerization of glucose-6-phosphate to fructose-6-phosphate. This Geotalea daltonii (strain DSM 22248 / JCM 15807 / FRC-32) (Geobacter daltonii) protein is Glucose-6-phosphate isomerase.